Here is a 91-residue protein sequence, read N- to C-terminus: Non-specific lipid-transfer protein P5 (91 aa).

Intrachain disulfides connect Cys3-Cys50, Cys13-Cys27, Cys28-Cys73, and Cys48-Cys87.

The protein localises to the secreted. Its function is as follows. Plant non-specific lipid-transfer proteins transfer phospholipids as well as galactolipids across membranes. May play a role in wax or cutin deposition in the cell walls of expanding epidermal cells and certain secretory tissues. The polypeptide is Non-specific lipid-transfer protein P5 (Vitis sp. (Grape)).